The sequence spans 286 residues: 4-hydroxy-3-methylbut-2-enyl diphosphate reductase (286 aa).

Position 12 (C12) interacts with [4Fe-4S] cluster. Residues H46 and H79 each contribute to the (2E)-4-hydroxy-3-methylbut-2-enyl diphosphate site. Residues H46 and H79 each contribute to the dimethylallyl diphosphate site. Positions 46 and 79 each coordinate isopentenyl diphosphate. C101 lines the [4Fe-4S] cluster pocket. H129 lines the (2E)-4-hydroxy-3-methylbut-2-enyl diphosphate pocket. A dimethylallyl diphosphate-binding site is contributed by H129. Position 129 (H129) interacts with isopentenyl diphosphate. The active-site Proton donor is E131. T169 is a binding site for (2E)-4-hydroxy-3-methylbut-2-enyl diphosphate. C198 contacts [4Fe-4S] cluster. 3 residues coordinate (2E)-4-hydroxy-3-methylbut-2-enyl diphosphate: S226, N228, and S270. Residues S226, N228, and S270 each coordinate dimethylallyl diphosphate. Residues S226, N228, and S270 each coordinate isopentenyl diphosphate.

The protein belongs to the IspH family. It depends on [4Fe-4S] cluster as a cofactor.

It carries out the reaction isopentenyl diphosphate + 2 oxidized [2Fe-2S]-[ferredoxin] + H2O = (2E)-4-hydroxy-3-methylbut-2-enyl diphosphate + 2 reduced [2Fe-2S]-[ferredoxin] + 2 H(+). It catalyses the reaction dimethylallyl diphosphate + 2 oxidized [2Fe-2S]-[ferredoxin] + H2O = (2E)-4-hydroxy-3-methylbut-2-enyl diphosphate + 2 reduced [2Fe-2S]-[ferredoxin] + 2 H(+). It participates in isoprenoid biosynthesis; dimethylallyl diphosphate biosynthesis; dimethylallyl diphosphate from (2E)-4-hydroxy-3-methylbutenyl diphosphate: step 1/1. Its pathway is isoprenoid biosynthesis; isopentenyl diphosphate biosynthesis via DXP pathway; isopentenyl diphosphate from 1-deoxy-D-xylulose 5-phosphate: step 6/6. Functionally, catalyzes the conversion of 1-hydroxy-2-methyl-2-(E)-butenyl 4-diphosphate (HMBPP) into a mixture of isopentenyl diphosphate (IPP) and dimethylallyl diphosphate (DMAPP). Acts in the terminal step of the DOXP/MEP pathway for isoprenoid precursor biosynthesis. The chain is 4-hydroxy-3-methylbut-2-enyl diphosphate reductase from Solidesulfovibrio magneticus (strain ATCC 700980 / DSM 13731 / RS-1) (Desulfovibrio magneticus).